A 165-amino-acid chain; its full sequence is Small ribosomal subunit protein uS5 (165 aa).

The S5 DRBM domain occupies 10-73; the sequence is QIEKLISLNR…TSARKNLRFV (64 aa).

This sequence belongs to the universal ribosomal protein uS5 family. Part of the 30S ribosomal subunit. Contacts proteins S4 and S8.

Its function is as follows. With S4 and S12 plays an important role in translational accuracy. In terms of biological role, located at the back of the 30S subunit body where it stabilizes the conformation of the head with respect to the body. In Borreliella afzelii (strain PKo) (Borrelia afzelii), this protein is Small ribosomal subunit protein uS5.